The following is a 398-amino-acid chain: Acetyl-CoA acetyltransferase (398 aa).

Ser-2 carries the post-translational modification N-acetylserine. Cys-91 acts as the Acyl-thioester intermediate in catalysis. Residues Tyr-186 and Lys-231 each coordinate CoA. Position 186 (Tyr-186) interacts with K(+). 3 residues coordinate K(+): Ala-248, Ala-249, and Ala-251. Position 252 (Ser-252) interacts with CoA. Residue Val-350 coordinates K(+). Active-site proton acceptor residues include His-354 and Cys-384.

It belongs to the thiolase-like superfamily. Thiolase family. In terms of assembly, homotetramer.

It is found in the cytoplasm. It catalyses the reaction 2 acetyl-CoA = acetoacetyl-CoA + CoA. The protein operates within metabolic intermediate biosynthesis; (R)-mevalonate biosynthesis; (R)-mevalonate from acetyl-CoA: step 1/3. Functionally, acetyl-CoA acetyltransferase; part of the first module of ergosterol biosynthesis pathway that includes the early steps of the pathway, conserved across all eukaryotes, and which results in the formation of mevalonate from acetyl-coenzyme A (acetyl-CoA). In this module, the acetyl-CoA acetyltransferase ERG10 catalyzes the formation of acetoacetyl-CoA. The hydroxymethylglutaryl-CoA synthase ERG13 then condenses acetyl-CoA with acetoacetyl-CoA to form HMG-CoA. The rate-limiting step of the early module is the reduction to mevalonate by the 3-hydroxy-3-methylglutaryl-coenzyme A (HMG-CoA) reductases HMG1 and HMG2 which are derived from a single ancestral HMGR gene by gene duplication. This chain is Acetyl-CoA acetyltransferase, found in Saccharomyces pastorianus (strain ATCC 76670 / Carlsberg bottom yeast no.2 / CBS 1503 / CLIB 180 / NBRC 10610 / NRRL Y-1525) (Saaz-type lager yeast).